Reading from the N-terminus, the 252-residue chain is 5'-nucleotidase SurE (252 aa).

The a divalent metal cation site is built by Asp8, Asp9, Ser40, and Asn92.

Belongs to the SurE nucleotidase family. A divalent metal cation is required as a cofactor.

It is found in the cytoplasm. The catalysed reaction is a ribonucleoside 5'-phosphate + H2O = a ribonucleoside + phosphate. Functionally, nucleotidase that shows phosphatase activity on nucleoside 5'-monophosphates. The chain is 5'-nucleotidase SurE from Mesorhizobium japonicum (strain LMG 29417 / CECT 9101 / MAFF 303099) (Mesorhizobium loti (strain MAFF 303099)).